A 111-amino-acid polypeptide reads, in one-letter code: Translation initiation factor 1A (111 aa).

Positions 11-83 constitute an S1-like domain; it reads KKIRLPKEGE…ERADVTWRYT (73 aa).

This sequence belongs to the eIF-1A family.

Functionally, seems to be required for maximal rate of protein biosynthesis. Enhances ribosome dissociation into subunits and stabilizes the binding of the initiator Met-tRNA(I) to 40 S ribosomal subunits. The protein is Translation initiation factor 1A (eIF1A) of Methanopyrus kandleri (strain AV19 / DSM 6324 / JCM 9639 / NBRC 100938).